The primary structure comprises 188 residues: FMN reductase (NADH) RutF (188 aa).

It belongs to the non-flavoprotein flavin reductase family. RutF subfamily.

The enzyme catalyses FMNH2 + NAD(+) = FMN + NADH + 2 H(+). Catalyzes the reduction of FMN to FMNH2 which is used to reduce pyrimidine by RutA via the Rut pathway. The protein is FMN reductase (NADH) RutF of Acinetobacter baylyi (strain ATCC 33305 / BD413 / ADP1).